We begin with the raw amino-acid sequence, 212 residues long: ER lumen protein-retaining receptor 1 (212 aa).

Topologically, residues 1–4 (MNLF) are lumenal. A helical transmembrane segment spans residues 5–24 (RFLGDLSHLLAIILLLLKIW). Over 25 to 32 (KSRSCAGI) the chain is Cytoplasmic. Residues 33-52 (SGKSQVLFAVVFTARYLDLF) traverse the membrane as a helical segment. Residues 47-48 (RY) form an interaction with the K-D-E-L motif on target proteins region. Over 53–58 (TNYISL) the chain is Lumenal. The helical transmembrane segment at 59–79 (YNTCMKVVYIACSFTTVWLIY) threads the bilayer. The Cytoplasmic portion of the chain corresponds to 80–92 (SKFKATYDGNHDT). A helical transmembrane segment spans residues 93 to 110 (FRVEFLVVPTAILAFLVN). Topologically, residues 111–116 (HDFTPL) are lumenal. Residues 117–135 (EILWTFSIYLESVAILPQL) traverse the membrane as a helical segment. Over 136-149 (FMVSKTGEAETITS) the chain is Cytoplasmic. The chain crosses the membrane as a helical span at residues 150–168 (HYLFALGVYRTLYLFNWIW). Residues 159–169 (RTLYLFNWIWR) form an interaction with the K-D-E-L motif on target proteins region. The Lumenal portion of the chain corresponds to 169 to 178 (RYHFEGFFDL). Residues 179–199 (IAIVAGLVQTVLYCDFFYLYI) form a helical membrane-spanning segment. At 200-212 (TKVLKGKKLSLPA) the chain is on the cytoplasmic side. Residues 204–207 (KGKK) form an important for recycling of cargo proteins with the sequence motif K-D-E-L from the Golgi to the endoplasmic reticulum region. Ser209 is modified (phosphoserine; by PKA).

It belongs to the ERD2 family. In terms of assembly, upon ligand binding the receptor oligomerizes and interacts with components of the transport machinery such as ARFGAP1 and ARF1. Phosphorylation by PKA at Ser-209 is required for endoplasmic reticulum retention function.

Its subcellular location is the golgi apparatus membrane. It localises to the cytoplasmic vesicle. The protein resides in the COPI-coated vesicle membrane. The protein localises to the endoplasmic reticulum membrane. It is found in the endoplasmic reticulum-Golgi intermediate compartment membrane. In terms of biological role, receptor for the C-terminal sequence motif K-D-E-L that is present on endoplasmic reticulum resident proteins and that mediates their recycling from the Golgi back to the endoplasmic reticulum. The sequence is that of ER lumen protein-retaining receptor 1 (KDELR1) from Homo sapiens (Human).